The primary structure comprises 75 residues: Brevinin-2HS2A (75 aa).

Residues 1-22 (MFTLKKPLLLLFFLGTISLSLC) form the signal peptide. The propeptide occupies 23 to 40 (QEERDADEEEGEMIEEEV). Cysteines 69 and 75 form a disulfide.

The protein belongs to the frog skin active peptide (FSAP) family. Brevinin subfamily. Expressed by the skin glands.

The protein resides in the secreted. Functionally, has antimicrobial activity against some Gram-positive bacteria and fungi but has no activity against a range of Gram-negative bacteria except P.faecalis. Has antimicrobial activity against the Gram-positive bacteria S.aureus ATCC 25923 (MIC=19 uM), B.licheniformis X39 (MIC=37.5 uM) and R.rhodochrous X15 (MIC=9.5 uM), is virtually inactive against E.faecium 091299 (MIC=150 uM) and S.carnosus KHS (MIC=150 uM) and inactive against E.faecalis 981. Active against the Gram-negative bacterium P.faecalis X29 (MIC=9.5 uM) and is inactive against E.coli, P.aeruginosa and S.typhi. Active against C.albicans ATCC 2002 (MIC=19 uM) and is also active against the slime mold 090223 (MIC=37.5 uM). Has extremely low hemolytic activity against human erythrocytes (LC(50)=300 uM). This Odorrana hainanensis (Odor frog) protein is Brevinin-2HS2A.